The following is a 187-amino-acid chain: Frataxin, mitochondrial (187 aa).

It belongs to the frataxin family. Monomer. Oligomer. Interacts with NIFS1.

It localises to the mitochondrion. The catalysed reaction is 4 Fe(2+) + O2 + 4 H(+) = 4 Fe(3+) + 2 H2O. Functionally, promotes the biosynthesis of heme as well as the assembly and repair of iron-sulfur clusters by delivering Fe(2+) to proteins involved in these pathways. May play a role in the protection against iron-catalyzed oxidative stress through its ability to catalyze the oxidation of Fe(2+) to Fe(3+). May be able to store large amounts of the metal in the form of a ferrihydrite mineral by oligomerization. Binds to the mitochondrial cysteine desulfurase NIFS1 and increases its activity. The chain is Frataxin, mitochondrial (FH) from Arabidopsis thaliana (Mouse-ear cress).